Here is a 492-residue protein sequence, read N- to C-terminus: Cytochrome P450 26A1 (492 aa).

Heme is bound at residue Cys438.

Belongs to the cytochrome P450 family. Requires heme as cofactor.

The protein localises to the endoplasmic reticulum membrane. The protein resides in the microsome membrane. It catalyses the reaction all-trans-retinoate + reduced [NADPH--hemoprotein reductase] + O2 = all-trans-(4S)-hydroxyretinoate + oxidized [NADPH--hemoprotein reductase] + H2O + H(+). In terms of biological role, a cytochrome P450 monooxygenase involved in the metabolism of all-trans retinoic acid (atRA), a signaling molecule that binds to retinoic acid receptors and regulates gene transcription. Mechanistically, uses molecular oxygen inserting one oxygen atom into a substrate, and reducing the second into a water molecule, with two electrons provided by NADPH via cytochrome P450 reductase (CPR; NADPH-ferrihemoprotein reductase). Catalyzes the hydroxylation of carbon hydrogen bonds of atRA primarily at C-4. Has no activity toward 9-cis and 13-cis retinoic acid stereoisomers. May play a role in the oxidative metabolism of xenobiotics such as tazarotenic acid. This Danio rerio (Zebrafish) protein is Cytochrome P450 26A1 (cyp26a1).